Reading from the N-terminus, the 428-residue chain is Adenylosuccinate synthetase (428 aa).

Residues 12 to 18 (GDEGKGK) and 40 to 42 (GHT) contribute to the GTP site. The Proton acceptor role is filled by Asp-13. 2 residues coordinate Mg(2+): Asp-13 and Gly-40. IMP contacts are provided by residues 13–16 (DEGK), 38–41 (NAGH), Thr-128, Arg-142, Gln-223, Thr-238, and Arg-302. Residue His-41 is the Proton donor of the active site. Substrate is bound at residue 298–304 (VTTGRPR). GTP-binding positions include Arg-304, 330–332 (KLD), and 413–415 (GVG).

Belongs to the adenylosuccinate synthetase family. As to quaternary structure, homodimer. It depends on Mg(2+) as a cofactor.

The protein resides in the cytoplasm. The enzyme catalyses IMP + L-aspartate + GTP = N(6)-(1,2-dicarboxyethyl)-AMP + GDP + phosphate + 2 H(+). Its pathway is purine metabolism; AMP biosynthesis via de novo pathway; AMP from IMP: step 1/2. Its function is as follows. Plays an important role in the de novo pathway of purine nucleotide biosynthesis. Catalyzes the first committed step in the biosynthesis of AMP from IMP. This Acidothermus cellulolyticus (strain ATCC 43068 / DSM 8971 / 11B) protein is Adenylosuccinate synthetase.